Consider the following 427-residue polypeptide: tRNA(Ile)-lysidine synthase (427 aa).

Residue 18–23 (SGGLDS) participates in ATP binding.

This sequence belongs to the tRNA(Ile)-lysidine synthase family.

The protein resides in the cytoplasm. It carries out the reaction cytidine(34) in tRNA(Ile2) + L-lysine + ATP = lysidine(34) in tRNA(Ile2) + AMP + diphosphate + H(+). Its function is as follows. Ligates lysine onto the cytidine present at position 34 of the AUA codon-specific tRNA(Ile) that contains the anticodon CAU, in an ATP-dependent manner. Cytidine is converted to lysidine, thus changing the amino acid specificity of the tRNA from methionine to isoleucine. The chain is tRNA(Ile)-lysidine synthase from Pseudomonas putida (strain ATCC 47054 / DSM 6125 / CFBP 8728 / NCIMB 11950 / KT2440).